A 1029-amino-acid polypeptide reads, in one-letter code: Cilia- and flagella-associated protein 91 (1029 aa).

Disordered stretches follow at residues 72 to 97 (NYRP…GPNR) and 117 to 170 (PPSQ…PWEP). A coiled-coil region spans residues 272 to 299 (LELLDNALQVREEELDDENRLRVEARKE). Residues 837-854 (ENQDQQEPQPQPQPSSSS) show a composition bias toward low complexity. 2 disordered regions span residues 837-861 (ENQD…DLAD) and 876-1029 (GEPS…EAAE). Residues 890–910 (QQLEADAEAEAEAEAEAEAGA) are compositionally biased toward acidic residues. Residues 911 to 921 (EAEASAQAGAE) are compositionally biased toward low complexity. A compositionally biased stretch (acidic residues) spans 922–932 (AEAEAGVEAEA). The segment covering 933–944 (EASAGAEASVGA) has biased composition (low complexity). The span at 964 to 982 (PEAEAEAEAGAEAEAENGA) shows a compositional bias: acidic residues. Residues 984-999 (AEARLGGEEEGFREGE) show a composition bias toward basic and acidic residues. Residues 1000–1015 (GQGGAAAGEAGPGGEL) show a composition bias toward gly residues. A compositionally biased stretch (acidic residues) spans 1016-1029 (AEGEGEAGEGEAAE).

Belongs to the CFAP91 family. Identified in a spoke-associated complex containing CFAP61, CFAP91 and CFAP251; the complex is associated with the radial spokes of the axoneme. The complex associates with Calmodulin; the association is calcium sensitive. Interacts with RSP3.

The protein localises to the cytoplasm. The protein resides in the cytoskeleton. Its subcellular location is the flagellum axoneme. As component of a spoke-associated complex, regulates flagellar dynein activity by mediating regulatory signals between the radial spokes and dynein arms. This chain is Cilia- and flagella-associated protein 91, found in Chlamydomonas reinhardtii (Chlamydomonas smithii).